We begin with the raw amino-acid sequence, 342 residues long: Manganese-dependent ADP-ribose/CDP-alcohol diphosphatase (342 aa).

N-acetylmethionine is present on M1. Zn(2+) is bound by residues D25, Q27, D74, N110, H241, H278, and H280.

It belongs to the ADPRibase-Mn family. As to quaternary structure, monomer. It depends on Mg(2+) as a cofactor.

It catalyses the reaction CDP-choline + H2O = phosphocholine + CMP + 2 H(+). The catalysed reaction is ADP-D-ribose + H2O = D-ribose 5-phosphate + AMP + 2 H(+). It carries out the reaction CDP-glycerol + H2O = sn-glycerol 3-phosphate + CMP + 2 H(+). Its function is as follows. Hydrolyzes ADP-ribose, IDP-ribose, CDP-glycerol, CDP-choline and CDP-ethanolamine, but not other non-reducing ADP-sugars or CDP-glucose. May be involved in immune cell signaling as suggested by the second-messenger role of ADP-ribose, which activates TRPM2 as a mediator of oxidative/nitrosative stress. This is Manganese-dependent ADP-ribose/CDP-alcohol diphosphatase (ADPRM) from Homo sapiens (Human).